Reading from the N-terminus, the 309-residue chain is Vacuolar membrane protein YOR292C (309 aa).

The Vacuolar portion of the chain corresponds to 1–52; it reads MPLQLFGRDQIVVHYDNGNMSNDDQNHQSVLGSWTRRAAAALRTLMNKRIQR. N-linked (GlcNAc...) asparagine glycosylation is present at N19. Residues 53-73 form a helical membrane-spanning segment; sequence ITLTHWLLLVIWVTSLWKFTS. The Cytoplasmic portion of the chain corresponds to 74–81; the sequence is HYRQLYAN. Residues 82–102 form a helical membrane-spanning segment; it reads SAVFATLCTNILLFGISDILA. At 103 to 183 the chain is on the vacuolar side; that stretch reads QSIACFYSYH…KTDTFDFFRW (81 aa). N121 is a glycosylation site (N-linked (GlcNAc...) asparagine). The chain crosses the membrane as a helical span at residues 184-204; sequence GCFMFWGFFISFFQAPWYKFL. Residues 205 to 225 are Cytoplasmic-facing; that stretch reads NFFYTEDPTVVQVFERVLSDQ. A helical transmembrane segment spans residues 226-246; the sequence is LLYSPISLYCFFMFSNYVMEG. The Vacuolar portion of the chain corresponds to 247–260; the sequence is GDKDTLGKKIQRLY. A helical transmembrane segment spans residues 261–281; it reads ISTLGCNYLVWPMVQFINFLI. The Cytoplasmic portion of the chain corresponds to 282 to 309; it reads MPRDFQAPFSSSVGVVWNCFLSMRNASK.

It belongs to the peroxisomal membrane protein PXMP2/4 family. In terms of processing, N-glycosylated.

It is found in the vacuole membrane. This is Vacuolar membrane protein YOR292C from Saccharomyces cerevisiae (strain ATCC 204508 / S288c) (Baker's yeast).